A 938-amino-acid polypeptide reads, in one-letter code: MIDYKNTLNLPETGFPMRGDLAKREPDMLKNWYDKNLYQKVRESSKGKKSFILHDGPPYANGNIHIGHAVNKILKDIIMKSKTALGFDTPYVPGWDCHGLPIELKVEGIVGKPNEKISAAEFRQACRDYAKEQVEGQKADFIRMGILGDWDNPYLTMNFDTEAHIIRTLGKVIANGHLYKGSKPVHWCLDCGSSLAEAEVEYEDKVSPSIYVRFKAIDSAAVEAKFNAVGKGSGQISAVIWTTTPWTLPSNKAISINPEFDYQLVQFGDERVVLVKDLVESVQKAVGVESVEVLGEVKGDALELMQFQHPFYDYSVPLILGDHVTTDGGTGLVHTAPDHGQDDFVVSKKYNIEMAGLVANDGKFISSTPFFAGLGVFESNEKVLEKLKEVGALLKLERIKHSYPHCWRHKTPIIFRATPQWFIGMETQGLREQALGEIKSVRWIPSWGEARIDTMVANRPDWCISRQRTWGVPMTMFVHNETEELHPRTLEILESVAKRVEEKGIQAWWDLDPVEVLGEEDAKNYRKVPDTLDVWFDSGSTYASVVEARPEFNGNSTDMYLEGSDQHRGWFMSSLMLSTATNGKAPYKQVLTHGFVVDEKGRKMSKSLGNVIVPSEVWNKNGADILRLWVASTDYTGEIAVSHNILNSAGESYRRIRNTARFLLANLNGFDPKRDLVKPEEMIALDRWAVSCALEAQNDIKEAYDNYQFHTVVQRLMRFCSIEMGSFYLDIIKDRQYTTKADSLARRSCQTALWHIAEALVRWMAPILSFTADEIWSYLPQVEGRSEFVFTEEFYEGLFGLTEADKLDDAYWQQILKVRAESNRVLEQARKDKVIGSGLEAKVTLYANNEIRAMLEQLGNELRFVLITSQAIIKPLSEADVAEGEMAGLAVKVERAEGEKCPRCWHFATDIGTHTEHSSVCGRCVENVAGEGEKRSFA.

A 'HIGH' region motif is present at residues 58–68; sequence PYANGNIHIGH. Residue E562 coordinates L-isoleucyl-5'-AMP. Positions 603–607 match the 'KMSKS' region motif; that stretch reads KMSKS. K606 serves as a coordination point for ATP. Positions 901, 904, 921, and 924 each coordinate Zn(2+).

Belongs to the class-I aminoacyl-tRNA synthetase family. IleS type 1 subfamily. Monomer. The cofactor is Zn(2+).

The protein localises to the cytoplasm. It carries out the reaction tRNA(Ile) + L-isoleucine + ATP = L-isoleucyl-tRNA(Ile) + AMP + diphosphate. Its function is as follows. Catalyzes the attachment of isoleucine to tRNA(Ile). As IleRS can inadvertently accommodate and process structurally similar amino acids such as valine, to avoid such errors it has two additional distinct tRNA(Ile)-dependent editing activities. One activity is designated as 'pretransfer' editing and involves the hydrolysis of activated Val-AMP. The other activity is designated 'posttransfer' editing and involves deacylation of mischarged Val-tRNA(Ile). The chain is Isoleucine--tRNA ligase from Actinobacillus pleuropneumoniae serotype 5b (strain L20).